The primary structure comprises 431 residues: Adenylosuccinate synthetase (431 aa).

Residues 13-19 (GDEGKGK) and 41-43 (GHT) contribute to the GTP site. D14 serves as the catalytic Proton acceptor. 2 residues coordinate Mg(2+): D14 and G41. Residues 14–17 (DEGK), 39–42 (NAGH), T130, R144, Q225, T240, and R304 each bind IMP. H42 acts as the Proton donor in catalysis. 300 to 306 (ATTGRQR) contributes to the substrate binding site. Residues R306, 332-334 (KLD), and 414-416 (STG) contribute to the GTP site.

It belongs to the adenylosuccinate synthetase family. As to quaternary structure, homodimer. It depends on Mg(2+) as a cofactor.

It localises to the cytoplasm. It carries out the reaction IMP + L-aspartate + GTP = N(6)-(1,2-dicarboxyethyl)-AMP + GDP + phosphate + 2 H(+). The protein operates within purine metabolism; AMP biosynthesis via de novo pathway; AMP from IMP: step 1/2. Its function is as follows. Plays an important role in the de novo pathway of purine nucleotide biosynthesis. Catalyzes the first committed step in the biosynthesis of AMP from IMP. The chain is Adenylosuccinate synthetase from Saccharophagus degradans (strain 2-40 / ATCC 43961 / DSM 17024).